The primary structure comprises 453 residues: 5-hydroxytryptamine receptor 1 (453 aa).

Residues 1–36 lie on the Extracellular side of the membrane; sequence MKSLKSSTHDVPHPEHVVWAPPAYDEQHHLFFSHGT. The chain crosses the membrane as a helical span at residues 37–57; the sequence is VLIGIVGSLIITVAVVGNVLV. Over 58 to 74 the chain is Cytoplasmic; the sequence is CLAIFTEPILSHSKSNF. A helical membrane pass occupies residues 75–94; the sequence is FIVSLAVADLLLALLVMTFA. The Extracellular portion of the chain corresponds to 95–110; sequence LVNDMYGYWLFGETFC. An intrachain disulfide couples Cys-110 to Cys-225. Residues 111 to 133 traverse the membrane as a helical segment; sequence FIWMSADVMCETASIFSICVISY. At 134 to 153 the chain is on the cytoplasmic side; that stretch reads DRLKQVQKPLHYEEFMTTTR. The helical transmembrane segment at 154-175 threads the bilayer; that stretch reads ALLIIACLWICSFVLSFVPIFL. The Extracellular portion of the chain corresponds to 176-223; sequence EWHELSVEEIKAIFKDNKTEKEKALEAHNFSSALNQTLGDNQKSNAKH. The chain crosses the membrane as a helical span at residues 224–244; that stretch reads VCLFDVHFTYSVIYSFICFYV. Over 245-301 the chain is Cytoplasmic; sequence PCTLMLTNYLRLFLIAQTHQVRIRSLQMTNPPQLRGQGASSYRNQGTQGSKAARTLT. A helical membrane pass occupies residues 302–322; that stretch reads IITGTFLACWLPFFIINPIAA. The Extracellular segment spans residues 323-331; it reads ADEHLIPLE. The helical transmembrane segment at 332 to 352 threads the bilayer; sequence CFMVTIWLGYFNSSVNPIIYG. The Cytoplasmic portion of the chain corresponds to 353 to 453; that stretch reads TSNSKFRAAF…VFDSDTAFSS (101 aa). The interval 397–428 is disordered; that stretch reads DLSSSEHPSDACDTGRGKNSKGGDCATADPTK. Residues 403-412 show a composition bias toward basic and acidic residues; that stretch reads HPSDACDTGR.

The protein belongs to the G-protein coupled receptor 1 family. Reproductive system.

The protein resides in the cell membrane. In terms of biological role, this is one of the several different receptors for 5-hydroxytryptamine (serotonin). 5-HT plays important roles in various behavioral and physiological processes in aplysia. These include feeding, locomotion, circadian rhythm, learning and memory, synaptic plasticity, and synaptic growth. This receptor is mediated by G proteins that stimulate phospholipase C. The sequence is that of 5-hydroxytryptamine receptor 1 (5HTB1) from Aplysia californica (California sea hare).